A 369-amino-acid polypeptide reads, in one-letter code: 3,4-dihydroxy-2-butanone 4-phosphate synthase (369 aa).

Residues 1–201 (MAFDRIEDII…IADLIHYRLS (201 aa)) form a DHBP synthase region. Residues 27–28 (RE), aspartate 32, 140–144 (RAGHT), and glutamate 164 contribute to the D-ribulose 5-phosphate site. Residue glutamate 28 coordinates Mg(2+). Histidine 143 contacts Mg(2+). Residues 202 to 369 (TEHTIVRIGE…EVIESIPFPG (168 aa)) form a GTP cyclohydrolase II-like region.

It in the N-terminal section; belongs to the DHBP synthase family. The protein in the C-terminal section; belongs to the GTP cyclohydrolase II family. Mg(2+) serves as cofactor. Requires Mn(2+) as cofactor.

It carries out the reaction D-ribulose 5-phosphate = (2S)-2-hydroxy-3-oxobutyl phosphate + formate + H(+). It participates in cofactor biosynthesis; riboflavin biosynthesis; 2-hydroxy-3-oxobutyl phosphate from D-ribulose 5-phosphate: step 1/1. Its function is as follows. Catalyzes the conversion of D-ribulose 5-phosphate to formate and 3,4-dihydroxy-2-butanone 4-phosphate. This Pseudomonas syringae pv. tomato (strain ATCC BAA-871 / DC3000) protein is 3,4-dihydroxy-2-butanone 4-phosphate synthase (ribB).